The following is a 943-amino-acid chain: Coiled-coil and C2 domain-containing protein 1A (943 aa).

At Thr-91 the chain carries Phosphothreonine. Disordered regions lie at residues 186–250 (NEAD…CSPL) and 300–337 (DLSRLPPPPDQLSPEPPLPAAQPLTSASTLTRPEVPQP). 2 stretches are compositionally biased toward low complexity: residues 195 to 206 (ASGKGAAAGHSH) and 229 to 238 (APSTTTPTSA). Ser-248 is subject to Phosphoserine. Residues 304–319 (LPPPPDQLSPEPPLPA) are compositionally biased toward pro residues. Residues 339–385 (RNLLEALEQRMERYHVAAAQAKAKGDQRKARMHERIVKQYQDAIRAH) adopt a coiled-coil conformation. Residues 430–483 (NHDEGSDDEEEETPKKQNTPAASTTQLKSSPSKAPPSGPAPAGKAAPKGTSNRA) are disordered. The residue at position 435 (Ser-435) is a Phosphoserine. Residues 445–456 (KQNTPAASTTQL) show a composition bias toward polar residues. Low complexity predominate over residues 469–478 (APAGKAAPKG). The stretch at 477–510 (KGTSNRAQQQLAFLEGRKKQLLQAALRAKQKNDV) forms a coiled coil. Positions 630–764 (RFEQRTFSVI…ETACEVHEIL (135 aa)) constitute a C2 domain.

This sequence belongs to the CC2D1 family. Highly expressed in brain, expression is enriched in the gray matter and strongest in the olfactory bulb.

It localises to the cytoplasm. It is found in the nucleus. The protein localises to the cytoskeleton. Its subcellular location is the microtubule organizing center. The protein resides in the centrosome. Functionally, transcription factor that binds specifically to the DRE (dual repressor element) and represses HTR1A gene transcription in neuronal cells. The combination of calcium and ATP specifically inactivates the binding with FRE. May play a role in the altered regulation of HTR1A associated with anxiety and major depression. Mediates HDAC-independent repression of HTR1A promoter in neuronal cell. Performs essential function in controlling functional maturation of synapses. The sequence is that of Coiled-coil and C2 domain-containing protein 1A (Cc2d1a) from Mus musculus (Mouse).